Consider the following 399-residue polypeptide: Formate-dependent phosphoribosylglycinamide formyltransferase (399 aa).

N(1)-(5-phospho-beta-D-ribosyl)glycinamide is bound by residues 22-23 (EL) and Glu-82. ATP-binding positions include Arg-115, Lys-157, 162 to 167 (SSGKGQ), 197 to 200 (EAVV), and Glu-205. Residues 120–315 (RLAAEELGLQ…EFELHARAIL (196 aa)) form the ATP-grasp domain. Residues Glu-274 and Glu-286 each coordinate Mg(2+). Residues Asp-293, Lys-362, and 369–370 (RR) each bind N(1)-(5-phospho-beta-D-ribosyl)glycinamide.

This sequence belongs to the PurK/PurT family. Homodimer.

The enzyme catalyses N(1)-(5-phospho-beta-D-ribosyl)glycinamide + formate + ATP = N(2)-formyl-N(1)-(5-phospho-beta-D-ribosyl)glycinamide + ADP + phosphate + H(+). Its pathway is purine metabolism; IMP biosynthesis via de novo pathway; N(2)-formyl-N(1)-(5-phospho-D-ribosyl)glycinamide from N(1)-(5-phospho-D-ribosyl)glycinamide (formate route): step 1/1. Involved in the de novo purine biosynthesis. Catalyzes the transfer of formate to 5-phospho-ribosyl-glycinamide (GAR), producing 5-phospho-ribosyl-N-formylglycinamide (FGAR). Formate is provided by PurU via hydrolysis of 10-formyl-tetrahydrofolate. The sequence is that of Formate-dependent phosphoribosylglycinamide formyltransferase from Thioalkalivibrio sulfidiphilus (strain HL-EbGR7).